Consider the following 115-residue polypeptide: Nitrogenase-stabilizing/protective protein NifW (115 aa).

This sequence belongs to the NifW family. As to quaternary structure, homotrimer; associates with NifD.

Functionally, may protect the nitrogenase Fe-Mo protein from oxidative damage. This Azotobacter vinelandii (strain DJ / ATCC BAA-1303) protein is Nitrogenase-stabilizing/protective protein NifW.